Reading from the N-terminus, the 215-residue chain is Probable GTP-binding protein EngB (215 aa).

Residues 31-215 (GPPEIAFAGR…RTAILQAVVQ (185 aa)) enclose the EngB-type G domain. GTP is bound by residues 39 to 46 (GRSNVGKS), 66 to 70 (GRTQE), 93 to 96 (DMPG), 160 to 163 (TKSD), and 194 to 196 (TSA). Ser46 and Thr68 together coordinate Mg(2+).

This sequence belongs to the TRAFAC class TrmE-Era-EngA-EngB-Septin-like GTPase superfamily. EngB GTPase family. Requires Mg(2+) as cofactor.

Necessary for normal cell division and for the maintenance of normal septation. The protein is Probable GTP-binding protein EngB of Bartonella bacilliformis (strain ATCC 35685 / KC583 / Herrer 020/F12,63).